We begin with the raw amino-acid sequence, 260 residues long: 3-alpha-(or 20-beta)-hydroxysteroid dehydrogenase (260 aa).

Positions 17, 19, 38, 61, 62, 88, 153, 157, 186, 188, and 191 each coordinate NAD(+). Residue Y153 is the Proton acceptor of the active site.

The protein belongs to the short-chain dehydrogenases/reductases (SDR) family. Homotetramer.

It carries out the reaction androstan-3alpha,17beta-diol + NAD(+) = 17beta-hydroxyandrostanone + NADH + H(+). It participates in lipid metabolism; steroid degradation. Functionally, probably involved in steroid metabolism. This Mycobacterium bovis (strain ATCC BAA-935 / AF2122/97) protein is 3-alpha-(or 20-beta)-hydroxysteroid dehydrogenase (fabG3).